The primary structure comprises 160 residues: Sec-independent protein translocase protein TatB (160 aa).

The helical transmembrane segment at 1-21 (MFGMGFFEILVVLVVAIIFLG) threads the bilayer. A disordered region spans residues 118–160 (HLNEEVSNEEALNKEVSSDESPKEVQLATDNNTKEHDKEKEHV). Basic and acidic residues-rich tracts occupy residues 128–140 (ALNK…ESPK) and 149–160 (NTKEHDKEKEHV).

This sequence belongs to the TatB family. In terms of assembly, the Tat system comprises two distinct complexes: a TatABC complex, containing multiple copies of TatA, TatB and TatC subunits, and a separate TatA complex, containing only TatA subunits. Substrates initially bind to the TatABC complex, which probably triggers association of the separate TatA complex to form the active translocon.

The protein localises to the cell inner membrane. Its function is as follows. Part of the twin-arginine translocation (Tat) system that transports large folded proteins containing a characteristic twin-arginine motif in their signal peptide across membranes. Together with TatC, TatB is part of a receptor directly interacting with Tat signal peptides. TatB may form an oligomeric binding site that transiently accommodates folded Tat precursor proteins before their translocation. The sequence is that of Sec-independent protein translocase protein TatB from Helicobacter pylori (strain HPAG1).